The primary structure comprises 122 residues: Small ribosomal subunit protein uS13 (122 aa).

A disordered region spans residues 99 to 122 (RGQRTHTNARTRKGPAKAIAGKKK).

It belongs to the universal ribosomal protein uS13 family. In terms of assembly, part of the 30S ribosomal subunit. Forms a loose heterodimer with protein S19. Forms two bridges to the 50S subunit in the 70S ribosome.

Located at the top of the head of the 30S subunit, it contacts several helices of the 16S rRNA. In the 70S ribosome it contacts the 23S rRNA (bridge B1a) and protein L5 of the 50S subunit (bridge B1b), connecting the 2 subunits; these bridges are implicated in subunit movement. Contacts the tRNAs in the A and P-sites. This chain is Small ribosomal subunit protein uS13, found in Rhizobium meliloti (strain 1021) (Ensifer meliloti).